Reading from the N-terminus, the 222-residue chain is Peptidyl-prolyl cis-trans isomerase FKBP7 (222 aa).

The first 23 residues, 1–23 (MPKTMHFLFRFIVFFYLWGLFTA), serve as a signal peptide directing secretion. The N-linked (GlcNAc...) asparagine glycan is linked to asparagine 45. In terms of domain architecture, PPIase FKBP-type spans 53 to 145 (GDLLNAHYDG…IFEIELYAVT (93 aa)). EF-hand domains lie at 145–180 (TKGP…EFEK) and 189–222 (YQDA…HDEL). Ca(2+) contacts are provided by aspartate 158, aspartate 160, aspartate 162, glutamine 164, glutamate 169, aspartate 202, aspartate 204, aspartate 206, and glutamate 213. Positions 200 to 222 (KNDHDGDGFISPKEYNVYQHDEL) are disordered. A Retention in the endoplasmic reticulum motif is present at residues 219–222 (HDEL).

In terms of processing, glycosylated.

It localises to the endoplasmic reticulum lumen. The enzyme catalyses [protein]-peptidylproline (omega=180) = [protein]-peptidylproline (omega=0). Functionally, PPIases accelerate the folding of proteins during protein synthesis. The sequence is that of Peptidyl-prolyl cis-trans isomerase FKBP7 (FKBP7) from Homo sapiens (Human).